The following is a 373-amino-acid chain: Flagellar P-ring protein (373 aa).

Positions 1-26 (MRLLFRFLTLVAVLAMSLADVAPAWA) are cleaved as a signal peptide.

It belongs to the FlgI family. The basal body constitutes a major portion of the flagellar organelle and consists of four rings (L,P,S, and M) mounted on a central rod.

The protein localises to the periplasm. It is found in the bacterial flagellum basal body. Its function is as follows. Assembles around the rod to form the L-ring and probably protects the motor/basal body from shearing forces during rotation. The polypeptide is Flagellar P-ring protein (Rhizobium etli (strain CIAT 652)).